The following is a 581-amino-acid chain: MCEQKYRWTKKQIRQQLAVVRGEMAPTLVLKNATYLNSVRGKWLDANIWIYQDRIVYVGQDMPAKLDDETEVVDCGQQVIVPGYIEHHAHPFQLYNPHSFANYAAAMGTTTLINDNLMFFLALEKKKALSMIESLDELPSSMYWWCRYDPQTEMNDEEGHFLNSKIKEWLEHPLVVQGGELTSWPKVITGDDGILHWMQETRRLRKPIEGHFPGASEKTLTQMSLLGVTSDHEAMTGEEVIRRLDLGYMTSLRHSSIRSDLAKILREMKELGIDDFSRCMLTTDGSPPSFYEQGIMDRLIKIALDEGIPPKDAYGMATYYVARYYGLDYELGMIAPGRIAHLNFLDNVFNPVPTSVLAKGQWVVRDGQRYGSDSVFPWEDFGMKRLTIDWDLSVDELHFSMPMGIELVNSVILKPYQVSVEASRDTLAEDHDECFFLLLDKHGKWKIPTMIKGFAKKVSGLASSFSTTGDIILIGKCIQDMIVAFNALKQQGGGIVLVENGEVISNIPLEIMGLLSSKPMEEVMEEEKKFVKALRERGYEHDDPIYSLLFFSSTHLPYIRVTQRGIYDVHKKTVLFPSIMR.

The protein belongs to the metallo-dependent hydrolases superfamily. Adenine deaminase family.

It carries out the reaction adenine + H2O + H(+) = hypoxanthine + NH4(+). The polypeptide is Putative adenine deaminase BH0637 (Halalkalibacterium halodurans (strain ATCC BAA-125 / DSM 18197 / FERM 7344 / JCM 9153 / C-125) (Bacillus halodurans)).